The primary structure comprises 470 residues: Nuclear receptor subfamily 0 group B member 1 (470 aa).

Tandem repeats lie at residues 1-67 (MAGE…YRCC), 68-133 (FCGK…YRCC), and 134-200 (FCGE…YRCC). Residues 1 to 253 (MAGENHQWQG…RPVALKNPQV (253 aa)) form a 4 X 67 AA tandem repeats region. 3 consecutive short sequence motifs (LXXLL motif) follow at residues 13–17 (LYNML), 80–84 (LYSML), and 146–150 (LYSLL). A 4; truncated repeat occupies 201–253 (FCGEDHPQQGSTLYCMPTSTNQAQAAPEERPRAPWWDASSGALRPVALKNPQV). In terms of domain architecture, NR LBD spans 215-469 (CMPTSTNQAQ…DMMLEMLCTK (255 aa)). The AF-2 motif motif lies at 461–466 (MMLEML).

This sequence belongs to the nuclear hormone receptor family. NR0 subfamily. Homodimer. Interacts with NR5A1, NR5A2, NR0B2 and with COPS2. Interacts with ESRRB; represses ESRRB activity at the GATA6 promoter.

Its subcellular location is the nucleus. The protein localises to the cytoplasm. Functionally, nuclear receptor that lacks a DNA-binding domain and acts as a corepressor that inhibits the transcriptional activity of other nuclear receptors through heterodimeric interactions. Component of a cascade required for the development of the hypothalamic-pituitary-adrenal-gonadal axis. May also have a role in the development of the embryo and in the maintenance of embryonic stem cell pluripotency. In Pongo pygmaeus (Bornean orangutan), this protein is Nuclear receptor subfamily 0 group B member 1 (NR0B1).